Consider the following 189-residue polypeptide: Crossover junction endodeoxyribonuclease RuvC (189 aa).

Residues Asp7, Glu68, and Asp141 contribute to the active site. Asp7, Glu68, and Asp141 together coordinate Mg(2+).

The protein belongs to the RuvC family. Homodimer which binds Holliday junction (HJ) DNA. The HJ becomes 2-fold symmetrical on binding to RuvC with unstacked arms; it has a different conformation from HJ DNA in complex with RuvA. In the full resolvosome a probable DNA-RuvA(4)-RuvB(12)-RuvC(2) complex forms which resolves the HJ. The cofactor is Mg(2+).

The protein resides in the cytoplasm. It carries out the reaction Endonucleolytic cleavage at a junction such as a reciprocal single-stranded crossover between two homologous DNA duplexes (Holliday junction).. Functionally, the RuvA-RuvB-RuvC complex processes Holliday junction (HJ) DNA during genetic recombination and DNA repair. Endonuclease that resolves HJ intermediates. Cleaves cruciform DNA by making single-stranded nicks across the HJ at symmetrical positions within the homologous arms, yielding a 5'-phosphate and a 3'-hydroxyl group; requires a central core of homology in the junction. The consensus cleavage sequence is 5'-(A/T)TT(C/G)-3'. Cleavage occurs on the 3'-side of the TT dinucleotide at the point of strand exchange. HJ branch migration catalyzed by RuvA-RuvB allows RuvC to scan DNA until it finds its consensus sequence, where it cleaves and resolves the cruciform DNA. The chain is Crossover junction endodeoxyribonuclease RuvC from Rhodococcus jostii (strain RHA1).